The chain runs to 865 residues: Nicotinate catabolism cluster-specific transcription factor (865 aa).

C2H2-type zinc fingers lie at residues 8–32 (HACTYPGCSKAFTRAEHLRRHSLNH) and 41–63 (YTCQRCMTHFSRADLLSRHLDRH). A disordered region spans residues 74–168 (GKGVLETRKR…SIDDDGTDPD (95 aa)). A Nuclear localization signal(NLS) motif is present at residues 77 to 87 (VLETRKRMRRA). Basic and acidic residues predominate over residues 78–89 (LETRKRMRRAED). The span at 96-105 (PPKRPSRHQQ) shows a compositional bias: basic residues. Over residues 108–132 (GPPVGAPLSSSGSVSAGSGRSSRSP) the composition is skewed to low complexity. The Nuclear export signal (NES) motif lies at 285-289 (LDIDL).

The protein resides in the nucleus. Its function is as follows. Transcription factor that specifically regulates the expression of the hxn gene cluster that mediates the degradation of nicotinate and related metabolites. In Emericella nidulans (strain FGSC A4 / ATCC 38163 / CBS 112.46 / NRRL 194 / M139) (Aspergillus nidulans), this protein is Nicotinate catabolism cluster-specific transcription factor.